The primary structure comprises 288 residues: uncharacterized protein (288 aa).

In terms of domain architecture, HTH rpiR-type spans 5–81; it reads GNVLNKIGSL…LELSIELATK (77 aa). The segment at residues 41–60 is a DNA-binding region (H-T-H motif); that stretch reads LSEIAKHLQVGEATLVRFCR. The 141-residue stretch at 129-269 folds into the SIS domain; that stretch reads VVKVLKKARR…YALLVQGEED (141 aa).

This is an uncharacterized protein from Haemophilus influenzae (strain ATCC 51907 / DSM 11121 / KW20 / Rd).